A 340-amino-acid chain; its full sequence is Ferredoxin--NADP reductase (340 aa).

Residues aspartate 33, glutamine 41, tyrosine 46, alanine 86, phenylalanine 120, aspartate 286, and threonine 327 each contribute to the FAD site.

Belongs to the ferredoxin--NADP reductase type 2 family. Homodimer. The cofactor is FAD.

The enzyme catalyses 2 reduced [2Fe-2S]-[ferredoxin] + NADP(+) + H(+) = 2 oxidized [2Fe-2S]-[ferredoxin] + NADPH. This is Ferredoxin--NADP reductase from Rickettsia conorii (strain ATCC VR-613 / Malish 7).